A 459-amino-acid polypeptide reads, in one-letter code: uncharacterized protein (459 aa).

This is an uncharacterized protein from Orgyia pseudotsugata (Douglas-fir tussock moth).